We begin with the raw amino-acid sequence, 227 residues long: Flagellar transcriptional regulator FtcR (227 aa).

Positions 1 to 116 (MIVVVDDRDM…EILARINAIR (116 aa)) constitute a Response regulatory domain. Positions 127–226 (ADGTQLGPIR…KRFLGYCINI (100 aa)) form a DNA-binding region, ompR/PhoB-type.

Required for transcription of flagellar genes. In Brucella abortus (strain 2308), this protein is Flagellar transcriptional regulator FtcR (ftcR).